Consider the following 85-residue polypeptide: Selenoprotein W (85 aa).

A cross-link (cysteinyl-selenocysteine (Cys-Sec); redox-active) is located at residues 10-13; sequence CGAU. A non-standard amino acid (selenocysteine) is located at residue Sec-13.

This sequence belongs to the SelWTH family. Selenoprotein W subfamily. As to expression, expressed ubiquitously with predominant expression in the pituitary, spinal cord, sciatic nerve, cerebral cortex, cerebral nuclei, thalamus, cerebellum, muscle, cartilage, trachea, gizzard and artery. Weakly expressed in pancreas, testis, ovary, kidney and veins.

It localises to the cytoplasm. Functionally, plays a role as a glutathione (GSH)-dependent antioxidant. May be involved in a redox-related process. May play a role in the myopathies of selenium deficiency. In Gallus gallus (Chicken), this protein is Selenoprotein W.